Consider the following 110-residue polypeptide: UPF0122 protein SGO_1122 (110 aa).

It belongs to the UPF0122 family.

Might take part in the signal recognition particle (SRP) pathway. This is inferred from the conservation of its genetic proximity to ftsY/ffh. May be a regulatory protein. The protein is UPF0122 protein SGO_1122 of Streptococcus gordonii (strain Challis / ATCC 35105 / BCRC 15272 / CH1 / DL1 / V288).